Consider the following 141-residue polypeptide: Ly6/PLAUR domain-containing protein 1 (141 aa).

Positions 1 to 20 (MWVLGIAATFCGLFWLPGLA) are cleaved as a signal peptide. 6 cysteine pairs are disulfide-bonded: Cys25/Cys54, Cys28/Cys37, Cys46/Cys71, Cys77/Cys100, Cys88/Cys97, and Cys101/Cys106. The UPAR/Ly6 domain maps to 25 to 107 (CYQCEEFQLN…ISCCNTPLCN (83 aa)). The N-linked (GlcNAc...) asparagine glycan is linked to Asn45. Gly115 carries GPI-anchor amidated glycine lipidation. The propeptide at 116-141 (SSASAIRPGLLTTLLFFHLALCLAHC) is removed in mature form.

Interacts with CHRNA4 and nAChRs containing alpha-4:beta-2 (CHRNA4:CHRNB2) and alpha-7 (CHRNA7) subunits. In terms of tissue distribution, preferentially expressed in the nervous system. Expressed in embryonic and postnatal postmitotic central and peripheral neurons including subpopulations of motor neurons, sensory neurons, interneurons and neurons of the autonomous nervous system. Expressed around the growing nerves in the limb bud. Expressed at high levels in specific brain regions such as the prefrontal cortex, amygdala, hippocampus, mediodorsal thalamus, dentate gyrus and specific brainstem nuclei (at protein level).

It localises to the cell membrane. Believed to act as a modulator of nicotinic acetylcholine receptors (nAChRs) activity. In vitro increases receptor desensitization and decreases affinity for ACh of alpha-4:beta-2-containing nAChRs. May play a role in the intracellular trafficking of alpha-4:beta-2 and alpha-7-containing nAChRs and may inhibit their expression at the cell surface. May be involved in the control of anxiety. In Mus musculus (Mouse), this protein is Ly6/PLAUR domain-containing protein 1 (Lypd1).